A 514-amino-acid chain; its full sequence is Putative GTP-binding protein 6 (514 aa).

A disordered region spans residues 48-71 (WAGGGPVRGGGEEDPREDEEEEED). Positions 59–71 (EEDPREDEEEEED) are enriched in acidic residues. The Hflx-type G domain occupies 285–449 (PVVSVVGYTN…ALEASVLRAT (165 aa)). 2 residues coordinate Mg(2+): threonine 298 and threonine 319.

This sequence belongs to the TRAFAC class OBG-HflX-like GTPase superfamily. HflX GTPase family. The cofactor is Mg(2+).

The sequence is that of Putative GTP-binding protein 6 (Gtpbp6) from Mus musculus (Mouse).